Here is a 126-residue protein sequence, read N- to C-terminus: Aspartate 1-decarboxylase (126 aa).

The Schiff-base intermediate with substrate; via pyruvic acid role is filled by Ser-25. Ser-25 carries the post-translational modification Pyruvic acid (Ser). Thr-57 lines the substrate pocket. The active-site Proton donor is Tyr-58. 73–75 (GGA) is a substrate binding site.

Belongs to the PanD family. Heterooctamer of four alpha and four beta subunits. Requires pyruvate as cofactor. Is synthesized initially as an inactive proenzyme, which is activated by self-cleavage at a specific serine bond to produce a beta-subunit with a hydroxyl group at its C-terminus and an alpha-subunit with a pyruvoyl group at its N-terminus.

The protein resides in the cytoplasm. It carries out the reaction L-aspartate + H(+) = beta-alanine + CO2. It functions in the pathway cofactor biosynthesis; (R)-pantothenate biosynthesis; beta-alanine from L-aspartate: step 1/1. Its function is as follows. Catalyzes the pyruvoyl-dependent decarboxylation of aspartate to produce beta-alanine. This is Aspartate 1-decarboxylase from Xylella fastidiosa (strain Temecula1 / ATCC 700964).